Reading from the N-terminus, the 466-residue chain is Argininosuccinate lyase (466 aa).

Belongs to the lyase 1 family. Argininosuccinate lyase subfamily.

The protein localises to the cytoplasm. The catalysed reaction is 2-(N(omega)-L-arginino)succinate = fumarate + L-arginine. Its pathway is amino-acid biosynthesis; L-arginine biosynthesis; L-arginine from L-ornithine and carbamoyl phosphate: step 3/3. In Brucella abortus (strain S19), this protein is Argininosuccinate lyase.